The sequence spans 234 residues: Uridylate kinase (234 aa).

ATP is bound at residue 9–12 (KLSG). Glycine 51 contacts UMP. Glycine 52 and arginine 56 together coordinate ATP. UMP contacts are provided by residues aspartate 71 and 132 to 139 (CGNPFFTT). Residues threonine 159, tyrosine 165, and aspartate 168 each contribute to the ATP site.

It belongs to the UMP kinase family. In terms of assembly, homohexamer.

Its subcellular location is the cytoplasm. The enzyme catalyses UMP + ATP = UDP + ADP. The protein operates within pyrimidine metabolism; CTP biosynthesis via de novo pathway; UDP from UMP (UMPK route): step 1/1. Inhibited by UTP. In terms of biological role, catalyzes the reversible phosphorylation of UMP to UDP. This chain is Uridylate kinase, found in Prochlorococcus marinus (strain MIT 9301).